The chain runs to 354 residues: Ephrin-4 (354 aa).

Residues 1–22 (MKRPLDFLLAICLILLRSSTFA) form the signal peptide. An Ephrin RBD domain is found at 23-173 (DEHTVHWNST…SKNMRLSMKV (151 aa)). N-linked (GlcNAc...) asparagine glycosylation is present at N30. Disulfide bonds link C55–C92 and C80–C162. A disordered region spans residues 173 to 196 (VLSSQPTPSPSSKPARSRTDARRQ). Residues 175–186 (SSQPTPSPSSKP) are compositionally biased toward low complexity. S335 is lipidated: GPI-anchor amidated serine. Residues 336-354 (SSSLPTFLIVFLIAVNLLF) constitute a propeptide, removed in mature form.

It belongs to the ephrin family. Post-translationally, may undergo proteolysis by metalloprotease sup-17 to give rise to a soluble form.

The protein resides in the cell membrane. Its function is as follows. Regulates the formation or stabilization of cell-cell contacts at several stages of epithelial morphogenesis. In early embryonic development, involved in ventral closure of the epidermis. During male tail morphogenesis, regulates precursor cell sorting together with mab-20 and allows the formation of distinct sensory rays. Probably acts as a ligand for lad-2 to regulate axon guidance of several neurons including SDQL, SDQR, SMD and PLN neurons during neurogenesis. In Caenorhabditis briggsae, this protein is Ephrin-4 (efn-4).